Here is a 526-residue protein sequence, read N- to C-terminus: Rho guanine nucleotide exchange factor 3 (526 aa).

The disordered stretch occupies residues E20–K40. Residues S47 and S70 each carry the phosphoserine modification. One can recognise a DH domain in the interval K122–K304. In terms of domain architecture, PH spans I291 to E449. The segment at E464 to V526 is disordered. Residues S466–R475 are compositionally biased toward polar residues.

As to quaternary structure, interacts with RHOA and RHOB.

It localises to the cytoplasm. Its function is as follows. Acts as a guanine nucleotide exchange factor (GEF) for RhoA and RhoB GTPases. The protein is Rho guanine nucleotide exchange factor 3 (ARHGEF3) of Pongo abelii (Sumatran orangutan).